The primary structure comprises 397 residues: tRNA-specific 2-thiouridylase MnmA (397 aa).

Residues 19-26 (AMSGGVDS) and leucine 45 contribute to the ATP site. Cysteine 113 serves as the catalytic Nucleophile. Residues cysteine 113 and cysteine 210 are joined by a disulfide bond. Glycine 137 contributes to the ATP binding site. Residues 160 to 162 (RDQ) form an interaction with tRNA region. Cysteine 210 serves as the catalytic Cysteine persulfide intermediate.

The protein belongs to the MnmA/TRMU family.

It localises to the cytoplasm. The enzyme catalyses S-sulfanyl-L-cysteinyl-[protein] + uridine(34) in tRNA + AH2 + ATP = 2-thiouridine(34) in tRNA + L-cysteinyl-[protein] + A + AMP + diphosphate + H(+). In terms of biological role, catalyzes the 2-thiolation of uridine at the wobble position (U34) of tRNA, leading to the formation of s(2)U34. The sequence is that of tRNA-specific 2-thiouridylase MnmA from Bradyrhizobium sp. (strain BTAi1 / ATCC BAA-1182).